The primary structure comprises 718 residues: ATP-dependent RNA helicase homolog DQX1 (718 aa).

The Helicase ATP-binding domain occupies 54-222 (HLESSPTGVV…WGNSPIVRVP (169 aa)). 67–74 (GDPGSGKS) is a binding site for ATP. The DEAQ box signature appears at 167–170 (DEAQ). Residues 245 to 447 (ACQAVLELCQ…ALMRALEDLD (203 aa)) form the Helicase C-terminal domain. The interval 690–718 (QLREGTAEPPAAATETSSPQEYGDGCVLQ) is disordered. A compositionally biased stretch (low complexity) spans 696-708 (AEPPAAATETSSP).

Ubiquitous.

It localises to the nucleus. Might be involved in RNA metabolism; it is missing helicase motif III and may not have helicase activity. The protein is ATP-dependent RNA helicase homolog DQX1 (Dqx1) of Mus musculus (Mouse).